The primary structure comprises 346 residues: Histidinol-phosphate aminotransferase (346 aa).

Lys-209 carries the N6-(pyridoxal phosphate)lysine modification.

The protein belongs to the class-II pyridoxal-phosphate-dependent aminotransferase family. Histidinol-phosphate aminotransferase subfamily. As to quaternary structure, homodimer. Requires pyridoxal 5'-phosphate as cofactor.

The enzyme catalyses L-histidinol phosphate + 2-oxoglutarate = 3-(imidazol-4-yl)-2-oxopropyl phosphate + L-glutamate. Its pathway is amino-acid biosynthesis; L-histidine biosynthesis; L-histidine from 5-phospho-alpha-D-ribose 1-diphosphate: step 7/9. This is Histidinol-phosphate aminotransferase from Vibrio cholerae serotype O1 (strain ATCC 39315 / El Tor Inaba N16961).